A 91-amino-acid polypeptide reads, in one-letter code: Small ribosomal subunit protein uS15 (91 aa).

This sequence belongs to the universal ribosomal protein uS15 family. Part of the 30S ribosomal subunit. Forms a bridge to the 50S subunit in the 70S ribosome, contacting the 23S rRNA.

One of the primary rRNA binding proteins, it binds directly to 16S rRNA where it helps nucleate assembly of the platform of the 30S subunit by binding and bridging several RNA helices of the 16S rRNA. Functionally, forms an intersubunit bridge (bridge B4) with the 23S rRNA of the 50S subunit in the ribosome. The protein is Small ribosomal subunit protein uS15 of Deinococcus radiodurans (strain ATCC 13939 / DSM 20539 / JCM 16871 / CCUG 27074 / LMG 4051 / NBRC 15346 / NCIMB 9279 / VKM B-1422 / R1).